Here is a 389-residue protein sequence, read N- to C-terminus: Phospho-N-acetylmuramoyl-pentapeptide-transferase (389 aa).

10 helical membrane-spanning segments follow: residues 25–45 (RAVM…PFVI), 74–94 (MGGV…ADWG), 97–117 (FIWI…VDDY), 134–154 (FFWQ…SVSE), 190–210 (ISYP…IVGS), 222–242 (GLVI…AYVM), 259–279 (AGEL…FLWF), 286–306 (VFMG…IAVI), 311–331 (IVLF…MLQV), and 366–386 (QVVV…LSTL).

It belongs to the glycosyltransferase 4 family. MraY subfamily. It depends on Mg(2+) as a cofactor.

The protein localises to the cell inner membrane. The enzyme catalyses UDP-N-acetyl-alpha-D-muramoyl-L-alanyl-gamma-D-glutamyl-meso-2,6-diaminopimeloyl-D-alanyl-D-alanine + di-trans,octa-cis-undecaprenyl phosphate = di-trans,octa-cis-undecaprenyl diphospho-N-acetyl-alpha-D-muramoyl-L-alanyl-D-glutamyl-meso-2,6-diaminopimeloyl-D-alanyl-D-alanine + UMP. It functions in the pathway cell wall biogenesis; peptidoglycan biosynthesis. Catalyzes the initial step of the lipid cycle reactions in the biosynthesis of the cell wall peptidoglycan: transfers peptidoglycan precursor phospho-MurNAc-pentapeptide from UDP-MurNAc-pentapeptide onto the lipid carrier undecaprenyl phosphate, yielding undecaprenyl-pyrophosphoryl-MurNAc-pentapeptide, known as lipid I. The protein is Phospho-N-acetylmuramoyl-pentapeptide-transferase of Ralstonia pickettii (strain 12J).